The following is a 411-amino-acid chain: Aspartate kinase (411 aa).

The ACT domain maps to Leu265–Val348.

The protein belongs to the aspartokinase family.

The protein localises to the cytoplasm. It carries out the reaction L-aspartate + ATP = 4-phospho-L-aspartate + ADP. It functions in the pathway amino-acid biosynthesis; L-lysine biosynthesis via DAP pathway; (S)-tetrahydrodipicolinate from L-aspartate: step 1/4. Its pathway is amino-acid biosynthesis; L-methionine biosynthesis via de novo pathway; L-homoserine from L-aspartate: step 1/3. It participates in amino-acid biosynthesis; L-threonine biosynthesis; L-threonine from L-aspartate: step 1/5. Its activity is regulated as follows. Allosterically feedback inhibited by L-lysine and L-threonine individually and also subject to a concerted feedback inhibition by these amino acids. Functionally, involved in the biosynthesis of L-aspartate-beta-semialdehyde which is a central intermediate in the biosynthesis of different amino acids (L-lysine, L-methionine, L-threonine). Catalyzes the phosphorylation of the beta-carboxyl group of L-aspartate to yield 4-phospho-L-aspartate. The sequence is that of Aspartate kinase from Pseudomonas putida (strain ATCC 47054 / DSM 6125 / CFBP 8728 / NCIMB 11950 / KT2440).